A 161-amino-acid chain; its full sequence is Photosystem I reaction center subunit XI (161 aa).

A run of 2 helical transmembrane segments spans residues 84-104 (LIST…YGLV) and 126-146 (FTGG…FLLE).

Belongs to the PsaL family.

It localises to the cellular thylakoid membrane. This chain is Photosystem I reaction center subunit XI, found in Trichodesmium erythraeum (strain IMS101).